The chain runs to 203 residues: LexA repressor (203 aa).

Positions 30 to 50 (VREICQAVSLKSTSTVHGHLK) form a DNA-binding region, H-T-H motif. Active-site for autocatalytic cleavage activity residues include S127 and K164.

This sequence belongs to the peptidase S24 family. As to quaternary structure, homodimer.

The enzyme catalyses Hydrolysis of Ala-|-Gly bond in repressor LexA.. Represses a number of genes involved in the response to DNA damage (SOS response), including recA and lexA. In the presence of single-stranded DNA, RecA interacts with LexA causing an autocatalytic cleavage which disrupts the DNA-binding part of LexA, leading to derepression of the SOS regulon and eventually DNA repair. This chain is LexA repressor, found in Clostridium perfringens (strain SM101 / Type A).